Reading from the N-terminus, the 370-residue chain is 3-isopropylmalate dehydrogenase 1 (370 aa).

4 residues coordinate substrate: Arg98, Arg108, Arg136, and Asp227. The Mg(2+) site is built by Asp227, Asp251, and Asp255. 289–301 contributes to the NAD(+) binding site; it reads GSAPDIAGQGIAN.

This sequence belongs to the isocitrate and isopropylmalate dehydrogenases family. LeuB type 1 subfamily. In terms of assembly, homodimer. Mg(2+) serves as cofactor. Mn(2+) is required as a cofactor.

The protein resides in the cytoplasm. It catalyses the reaction (2R,3S)-3-isopropylmalate + NAD(+) = 4-methyl-2-oxopentanoate + CO2 + NADH. It participates in amino-acid biosynthesis; L-leucine biosynthesis; L-leucine from 3-methyl-2-oxobutanoate: step 3/4. In terms of biological role, catalyzes the oxidation of 3-carboxy-2-hydroxy-4-methylpentanoate (3-isopropylmalate) to 3-carboxy-4-methyl-2-oxopentanoate. The product decarboxylates to 4-methyl-2 oxopentanoate. This chain is 3-isopropylmalate dehydrogenase 1, found in Bordetella bronchiseptica (strain ATCC BAA-588 / NCTC 13252 / RB50) (Alcaligenes bronchisepticus).